Consider the following 613-residue polypeptide: pH-response transcription factor pacC/RIM101 (613 aa).

Positions 1-61 are disordered; sequence MSPSAPEQKP…SSTAPSTSSD (61 aa). Residues 11-60 show a composition bias toward low complexity; sequence QLQQQQQQQQQGSSSGDSSSGSVNDSKSVTPAPSATSSTSQSSTAPSTSS. 3 consecutive C2H2-type zinc fingers follow at residues 64–89, 100–124, and 130–152; these read LICR…CERH, LTCQ…IRVH, and HKCE…VKTH. Residues 146 to 157 show a composition bias toward basic and acidic residues; it reads KKHVKTHADDSV. Disordered regions lie at residues 146-186, 371-391, 406-535, and 565-613; these read KKHV…YDHT, NTPS…GADG, AISS…ATRE, and EFVE…MPGA. Residues 417–441 show a composition bias toward low complexity; sequence PPSSSMSYTSGHSPSPSSSAMSPQS. Polar residues-rich tracts occupy residues 442–460 and 506–517; these read RHGS…SLPA and SGASTPKASESA. Positions 451 to 454 match the YPX[LI] motif 1 motif; the sequence is YPTL. Positions 605-608 match the YPX[LI] motif 2 motif; it reads YPIL.

The protein belongs to the pacC/RIM101 family. As to quaternary structure, binds to DNA. In terms of processing, activated by C-terminal proteolytic cleavage by signaling protease (probably palB/RIM13) at neutral to alkaline ambient pH.

It localises to the cytoplasm. The protein localises to the nucleus. In terms of biological role, transcription factor that mediates regulation of both acid- and alkaline-expressed genes in response to ambient pH. At alkaline ambient pH, activates transcription of alkaline-expressed genes (including PAC1 itself) and represses transcription of acid-expressed genes. The sequence is that of pH-response transcription factor pacC/RIM101 (PAC1) from Gibberella moniliformis (Maize ear and stalk rot fungus).